The chain runs to 429 residues: Cyclin-B2-2 (429 aa).

The tract at residues 66–98 (SQRKQESCDKKKLDSLHPSISRSQEETKKLKPS) is disordered. The span at 68–80 (RKQESCDKKKLDS) shows a compositional bias: basic and acidic residues.

Belongs to the cyclin family. Cyclin AB subfamily. Interacts with CDC20-1 and CDC20-2. As to expression, expressed in roots.

The polypeptide is Cyclin-B2-2 (CYCB2-2) (Arabidopsis thaliana (Mouse-ear cress)).